Here is a 226-residue protein sequence, read N- to C-terminus: PKHD-type hydroxylase Bpet2704 (226 aa).

Residues 78–178 (KIFPPLFNRY…RISAFFWMQS (101 aa)) form the Fe2OG dioxygenase domain. The Fe cation site is built by His96, Asp98, and His159. Arg169 contacts 2-oxoglutarate.

It depends on Fe(2+) as a cofactor. The cofactor is L-ascorbate.

In Bordetella petrii (strain ATCC BAA-461 / DSM 12804 / CCUG 43448), this protein is PKHD-type hydroxylase Bpet2704.